The sequence spans 426 residues: Histidine--tRNA ligase (426 aa).

The protein belongs to the class-II aminoacyl-tRNA synthetase family. As to quaternary structure, homodimer.

It is found in the cytoplasm. It catalyses the reaction tRNA(His) + L-histidine + ATP = L-histidyl-tRNA(His) + AMP + diphosphate + H(+). In Legionella pneumophila subsp. pneumophila (strain Philadelphia 1 / ATCC 33152 / DSM 7513), this protein is Histidine--tRNA ligase.